Reading from the N-terminus, the 526-residue chain is ATP synthase subunit alpha (526 aa).

Position 171–178 (171–178) interacts with ATP; it reads GDRQTGKT.

It belongs to the ATPase alpha/beta chains family. As to quaternary structure, F-type ATPases have 2 components, CF(1) - the catalytic core - and CF(0) - the membrane proton channel. CF(1) has five subunits: alpha(3), beta(3), gamma(1), delta(1), epsilon(1). CF(0) has four main subunits: a, b, b' and c.

It localises to the cell inner membrane. It carries out the reaction ATP + H2O + 4 H(+)(in) = ADP + phosphate + 5 H(+)(out). Functionally, produces ATP from ADP in the presence of a proton gradient across the membrane. The alpha chain is a regulatory subunit. This Chlorobium limicola (strain DSM 245 / NBRC 103803 / 6330) protein is ATP synthase subunit alpha.